The sequence spans 45 residues: Large ribosomal subunit protein bL34c (45 aa).

Polar residues predominate over residues 1–10 (MSKGFSNGTN). The disordered stretch occupies residues 1-45 (MSKGFSNGTNIKRVRKSGFRARMSNSSGRKILNSRRRKQRKKIAL). Basic residues predominate over residues 32–45 (LNSRRRKQRKKIAL).

It belongs to the bacterial ribosomal protein bL34 family.

Its subcellular location is the plastid. The protein localises to the chloroplast. In Gracilaria tenuistipitata var. liui (Red alga), this protein is Large ribosomal subunit protein bL34c.